The primary structure comprises 335 residues: Fructose-1,6-bisphosphatase class 1 (335 aa).

E92, D114, L116, and D117 together coordinate Mg(2+). Substrate is bound by residues 117-120 (DGSS), N210, Y242, and K274. Residue E280 coordinates Mg(2+).

This sequence belongs to the FBPase class 1 family. Homotetramer. Mg(2+) serves as cofactor.

The protein resides in the cytoplasm. It catalyses the reaction beta-D-fructose 1,6-bisphosphate + H2O = beta-D-fructose 6-phosphate + phosphate. The protein operates within carbohydrate biosynthesis; gluconeogenesis. The polypeptide is Fructose-1,6-bisphosphatase class 1 (Lawsonia intracellularis (strain PHE/MN1-00)).